The following is a 106-amino-acid chain: MVNVPKTRKTYCKGKECRKHTQHKVTQYKAGKASLFAQGKRRYDRKQRGYGGQTKQIFHKKAKTTKKVVLKLECVVCKTKAQLSLKRCKHFELGGDKKQKGQALQF.

This sequence belongs to the eukaryotic ribosomal protein eL42 family.

The sequence is that of Large ribosomal subunit protein eL42 (RPL44) from Schwanniomyces occidentalis (Yeast).